The chain runs to 98 residues: A-type ATP synthase subunit F (98 aa).

This sequence belongs to the V-ATPase F subunit family. As to quaternary structure, the A-type ATPase is composed of subunits A(3), B(3), C, D, E(1 or 2), F, H(2), I and K(x).

It localises to the cell membrane. Its function is as follows. Component of the A-type ATP synthase that produces ATP from ADP in the presence of a proton gradient across the membrane. This Methanocaldococcus jannaschii (strain ATCC 43067 / DSM 2661 / JAL-1 / JCM 10045 / NBRC 100440) (Methanococcus jannaschii) protein is A-type ATP synthase subunit F.